The chain runs to 37 residues: Cytochrome b6-f complex subunit 5 (37 aa).

The helical transmembrane segment at 5 to 25 (LLCGIVLGLIPVTLLGLFVAA) threads the bilayer.

It belongs to the PetG family. As to quaternary structure, the 4 large subunits of the cytochrome b6-f complex are cytochrome b6, subunit IV (17 kDa polypeptide, PetD), cytochrome f and the Rieske protein, while the 4 small subunits are PetG, PetL, PetM and PetN. The complex functions as a dimer.

It localises to the cellular thylakoid membrane. Functionally, component of the cytochrome b6-f complex, which mediates electron transfer between photosystem II (PSII) and photosystem I (PSI), cyclic electron flow around PSI, and state transitions. PetG is required for either the stability or assembly of the cytochrome b6-f complex. In Synechococcus sp. (strain WH7803), this protein is Cytochrome b6-f complex subunit 5.